The primary structure comprises 619 residues: MLLQISEPGAGVKPQRRLAVGIDLGTTHSLVATVRDEQTVVLGDAQGRVLLPSVVRYLGAGAIEVGYEAKARQAEDPENTFVSVKRYMGRGLGDLASHHGAPYRFVEGEGMVQFDTRAGRISPVQVSAEILKVLRDRAVAELGGELAGAVITVPAYFDEAQRQATKDAAKLAGLEVFRLLNEPTAAAVAYGLDNAAEGVYAVYDLGGGTFDISVLKLTRGVFEVLATNGDPALGGDDFDRAVYDWLLAQSGLNGLSSSDASLLLTASRAAKERLSEQTEATVDTMLSDGSRIVATLSRDTFAELTAGLVKKTLTPVRKALRDAGLAIDDIKGVVLVGGATRMPCIREAVAEFFQQTPLTDLDPDKVVALGAAMQANLLAGNRAGGDWLLLDVIPLSLGIETLGGLCEKIVPRNTTIPVARAQEFTTWKDGQTAMSIHVVQGERELVSECRSLARFELRGIPPMAAGAARIRVTYQVDADGLLNVTAAEQTSGVEARIEVKPSYGLSDAEVARMIEDSYLHARDDLEARRLQEQKVEAARLIEATESALTEDGGLLTEQELEVLVKGLQVLKGAMEGSDWQAIKNAADALNEASTEFAGRRMDHSIKAALTGQKLESLGV.

This sequence belongs to the heat shock protein 70 family.

Chaperone involved in the maturation of iron-sulfur cluster-containing proteins. Has a low intrinsic ATPase activity which is markedly stimulated by HscB. This chain is Chaperone protein HscA homolog, found in Methylococcus capsulatus (strain ATCC 33009 / NCIMB 11132 / Bath).